Consider the following 526-residue polypeptide: MSLRPSERVEVRRNRYKVAVDAEEGRRRREDNMVEIRKSRREESLLKKRREGLQAQAPVPASAATGVDKKLESLPAMIGGVYSDDNNLQLEATTQFRKLLSIERSPPIEEVIQSGVVPRFVQFLTREDFPQLQFEAAWALTNIASGTSENTKVVIDHGAVPIFVKLLGSSSDDVREQAVWALGNVAGDSPKCRDLVLANGALLPLLAQLNEHTKLSMLRNATWTLSNFCRGKPQPSFEQTRPALPALARLIHSNDEEVLTDACWALSYLSDGTNDKIQAVIEAGVCPRLVELLLHPSPSVLIPALRTVGNIVTGDDAQTQCIIDHQALPCLLSLLTQNLKKSIKKEACWTISNITAGNKDQIQAVINAGIIGPLVNLLQTAEFDIKKEAAWAISNATSGGSHDQIKYLVSEGCIKPLCDLLICPDIRIVTVCLEGLENILKVGETDKTLAAGDVNVFSQMIDEAEGLEKIENLQSHDNNEIYEKAVKILEAYWMDEEDDTMGATTVAAPQGATFDFGQGGGAAQFK.

The IBB domain maps to 1–58 (MSLRPSERVEVRRNRYKVAVDAEEGRRRREDNMVEIRKSRREESLLKKRREGLQAQAP). ARM repeat units follow at residues 105–145 (SPPI…NIAS), 148–187 (SENT…NVAG), 190–230 (PKCR…NFCR), 232–271 (KPQP…YLSD), 274–313 (NDKI…NIVT), 316–356 (DAQT…NITA), 359–398 (KDQI…NATS), and 402–441 (HDQI…NILK).

It belongs to the importin alpha family. Forms a complex with importin subunit beta-1. The whole complex, most stable and composed of importin alpha, importin beta and NLS substrate, is referred to as PTAC or pore targeting complex. Interacts with mungbean yellow mosaic virus capsid protein. Highly expressed in callus, followed by root and etiolated leaf. Low expression in green leaf.

Its subcellular location is the cytoplasm. The protein resides in the perinuclear region. Functionally, functions in nuclear protein import. Binds specifically and directly to substrates containing either a simple or bipartite NLS motif. Promotes docking of import substrates to the nuclear envelope. This chain is Importin subunit alpha-1a, found in Oryza sativa subsp. japonica (Rice).